Reading from the N-terminus, the 381-residue chain is 4-hydroxy-3-methylbut-2-en-1-yl diphosphate synthase (flavodoxin) (381 aa).

Positions 280, 283, 315, and 322 each coordinate [4Fe-4S] cluster.

Belongs to the IspG family. The cofactor is [4Fe-4S] cluster.

The catalysed reaction is (2E)-4-hydroxy-3-methylbut-2-enyl diphosphate + oxidized [flavodoxin] + H2O + 2 H(+) = 2-C-methyl-D-erythritol 2,4-cyclic diphosphate + reduced [flavodoxin]. It functions in the pathway isoprenoid biosynthesis; isopentenyl diphosphate biosynthesis via DXP pathway; isopentenyl diphosphate from 1-deoxy-D-xylulose 5-phosphate: step 5/6. In terms of biological role, converts 2C-methyl-D-erythritol 2,4-cyclodiphosphate (ME-2,4cPP) into 1-hydroxy-2-methyl-2-(E)-butenyl 4-diphosphate. This is 4-hydroxy-3-methylbut-2-en-1-yl diphosphate synthase (flavodoxin) from Clavibacter sepedonicus (Clavibacter michiganensis subsp. sepedonicus).